Reading from the N-terminus, the 224-residue chain is Cytidylate kinase (224 aa).

Residue 10–18 coordinates ATP; the sequence is GPSGVGKGT.

The protein belongs to the cytidylate kinase family. Type 1 subfamily.

It localises to the cytoplasm. It catalyses the reaction CMP + ATP = CDP + ADP. It carries out the reaction dCMP + ATP = dCDP + ADP. This is Cytidylate kinase from Haemophilus ducreyi (strain 35000HP / ATCC 700724).